The sequence spans 982 residues: Probable beta-galactosidase C (982 aa).

The signal sequence occupies residues 1 to 21; the sequence is MRLFALLPVLLGLISSHFVSA. Substrate is bound by residues Y80, N125, A126, E127, and N185. E186 (proton donor) is an active-site residue. Y249 serves as a coordination point for substrate. Cysteines 255 and 302 form a disulfide. N274 carries an N-linked (GlcNAc...) asparagine glycan. E285 (nucleophile) is an active-site residue. Y351 serves as a coordination point for substrate. N389, N434, N600, N675, N718, and N785 each carry an N-linked (GlcNAc...) asparagine glycan.

This sequence belongs to the glycosyl hydrolase 35 family.

Its subcellular location is the secreted. It carries out the reaction Hydrolysis of terminal non-reducing beta-D-galactose residues in beta-D-galactosides.. Its function is as follows. Cleaves beta-linked terminal galactosyl residues from gangliosides, glycoproteins, and glycosaminoglycans. In Penicillium rubens (strain ATCC 28089 / DSM 1075 / NRRL 1951 / Wisconsin 54-1255) (Penicillium chrysogenum), this protein is Probable beta-galactosidase C (lacC).